The following is a 729-amino-acid chain: Oligopeptide transporter 4 (729 aa).

Residue alanine 2 is modified to N-acetylalanine. Serine 8 bears the Phosphoserine mark. Helical transmembrane passes span 37–57 (MWFL…FFSY), 61–81 (PLVI…HFLA), 123–143 (AFGS…AFYG), 148–168 (FIAG…WAGL), 177–194 (AHMW…FRAL), 207–227 (FFVI…YLFT), 256–276 (GLGA…SPLI), 279–299 (FFAI…VLPL), 352–372 (LSMF…STLT), 410–430 (WWFY…CVFL), 438–458 (WWGL…ISII), 522–542 (FLVQ…VAWW), 592–612 (YAAM…VWSL), 621–637 (WIPL…TAMM), 640–660 (ATAV…LFVF), and 673–693 (VLSA…YFSV).

The protein belongs to the oligopeptide OPT transporter (TC 2.A.67.1) family. Expressed in flowers, leaves, roots, and stems.

The protein resides in the membrane. In terms of biological role, involved in the translocation of tetra- and pentapeptides across the cellular membrane in an energy-dependent manner. This chain is Oligopeptide transporter 4 (OPT4), found in Arabidopsis thaliana (Mouse-ear cress).